We begin with the raw amino-acid sequence, 116 residues long: Large ribosomal subunit protein uL18 (116 aa).

This sequence belongs to the universal ribosomal protein uL18 family. Part of the 50S ribosomal subunit; part of the 5S rRNA/L5/L18/L25 subcomplex. Contacts the 5S and 23S rRNAs.

Its function is as follows. This is one of the proteins that bind and probably mediate the attachment of the 5S RNA into the large ribosomal subunit, where it forms part of the central protuberance. This chain is Large ribosomal subunit protein uL18, found in Pseudomonas fluorescens (strain ATCC BAA-477 / NRRL B-23932 / Pf-5).